The sequence spans 177 residues: TRAF-interacting protein with FHA domain-containing protein A (177 aa).

In terms of domain architecture, FHA spans 48 to 104 (VAFGRDYNVCRYPLLSNRVSRIQFNLQFFKHFNCSTTAIEIKNLSKKNKLYVDNLEL).

This sequence belongs to the TIFA family. In terms of assembly, interacts with traf6.

Its subcellular location is the cytoplasm. Functionally, adapter molecule that plays a key role in the activation of pro-inflammatory NF-kappa-B signaling following detection of bacterial pathogen-associated molecular pattern metabolites (PAMPs). Promotes activation of an innate immune response by inducing the oligomerization and polyubiquitination of TRAF6, which leads to the activation of TAK1 and IKK through a proteasome-independent mechanism. The protein is TRAF-interacting protein with FHA domain-containing protein A of Xenopus tropicalis (Western clawed frog).